A 784-amino-acid chain; its full sequence is MQQKMLRILEFDKVKEQLAEHASSALGLEKIAALVPSSDLDEVAVWLEETDEAAAVLRLRGYVPLDGVVDIRSHLKRAAIGGVLSPIELLEVAATAAASRQMKQLIMSLHDEHGGLARLADYADELAEVPALEEDIRRSIDDHGEVLDTASDRLRSLRGQIRAAEARIREKLESIIRSPSAQKRLSDAIITIRNDRYVIPVKQEYRSAYGGIVHDQSASGATLFIEPQVVVELNNALREARAKEKQEIERILRELSAKVAEHDEPLKRAVEALAHFDFLFAKAKYARRLQAAKPAVNNRGYLRFLQARHPLIDQDKAVPNDIVLGGDYTTIVITGPNTGGKTVTLKTVGLLTIMAQAGLFIPAADGSEAAVFRSVFADIGDEQSIEQSLSTFSSHMVNIVDILRHVDEESLVLFDELGAGTDPQEGAALAIAILDEVHGRGARTVATTHYPELKAYGYNRPGVVNASVEFDTETLRPTYKLLIGIPGRSNAFDISRRLGLDERIIERAKVQVSAESHSVENMIASLERSKKQAEEDEARAHSAREEAERLRAEWEQKLEELEDKKAEQLAEAAQKATDIIRAAEREAERIINELRRLQKEKQAEVKEHELIAAKQRLAAAVPVVEKRKKTKKATARHAFQSGDEVKVTSLNQKGYLLEKVSEDEWQVQLGILKMKIHERDLEYIGSAPAKEVTPIATVKGKDAHVSLELDLRGERYEDALVRLEKYIDDAVLAGYPRVSIIHGKGTGALRQGVQQFLKQHRAVKSFRFGAANEGGTGVTVVELK.

Residue 335-342 (GPNTGGKT) participates in ATP binding. The segment at 527–546 (ERSKKQAEEDEARAHSAREE) is disordered. The region spanning 709-784 (LDLRGERYED…GTGVTVVELK (76 aa)) is the Smr domain.

The protein belongs to the DNA mismatch repair MutS family. MutS2 subfamily. As to quaternary structure, homodimer. Binds to stalled ribosomes, contacting rRNA.

Its function is as follows. Endonuclease that is involved in the suppression of homologous recombination and thus may have a key role in the control of bacterial genetic diversity. Acts as a ribosome collision sensor, splitting the ribosome into its 2 subunits. Detects stalled/collided 70S ribosomes which it binds and splits by an ATP-hydrolysis driven conformational change. Acts upstream of the ribosome quality control system (RQC), a ribosome-associated complex that mediates the extraction of incompletely synthesized nascent chains from stalled ribosomes and their subsequent degradation. Probably generates substrates for RQC. This Geobacillus thermodenitrificans (strain NG80-2) protein is Endonuclease MutS2.